The chain runs to 363 residues: Small ribosomal subunit biogenesis GTPase RsgA (363 aa).

The region spanning 112–268 (HQQVIAANID…LIDTPGMREL (157 aa)) is the CP-type G domain. Residues 157–160 (TKAD) and 210–218 (GSSGAGKST) contribute to the GTP site. 4 residues coordinate Zn(2+): Cys291, Cys296, His298, and Cys304. Positions 340–363 (RVAQNNRGKGSGKRPASIDRPGRR) are disordered.

Belongs to the TRAFAC class YlqF/YawG GTPase family. RsgA subfamily. Monomer. Associates with 30S ribosomal subunit, binds 16S rRNA. It depends on Zn(2+) as a cofactor.

It localises to the cytoplasm. Its function is as follows. One of several proteins that assist in the late maturation steps of the functional core of the 30S ribosomal subunit. Helps release RbfA from mature subunits. May play a role in the assembly of ribosomal proteins into the subunit. Circularly permuted GTPase that catalyzes slow GTP hydrolysis, GTPase activity is stimulated by the 30S ribosomal subunit. This Xanthomonas oryzae pv. oryzae (strain MAFF 311018) protein is Small ribosomal subunit biogenesis GTPase RsgA.